A 60-amino-acid polypeptide reads, in one-letter code: UPF0434 protein Mfla_2088 (60 aa).

It belongs to the UPF0434 family.

The chain is UPF0434 protein Mfla_2088 from Methylobacillus flagellatus (strain ATCC 51484 / DSM 6875 / VKM B-1610 / KT).